A 432-amino-acid polypeptide reads, in one-letter code: EF-hand calcium-binding domain-containing protein 3 (432 aa).

2 EF-hand domains span residues 45 to 80 and 81 to 116; these read AQLE…LGMN and LNAY…KKLF. Ca(2+)-binding residues include Asp-94, Asp-96, Asp-98, Lys-100, and Asp-105. Tyr-273 is modified (phosphotyrosine). The tract at residues 394–432 is disordered; it reads NVNKTSPSNSGLSSPSDLSESDPETGRKRKRKSSRGFRQ. The span at 399–411 shows a compositional bias: low complexity; sequence SPSNSGLSSPSDL. The segment covering 420 to 432 has biased composition (basic residues); that stretch reads RKRKRKSSRGFRQ.

The chain is EF-hand calcium-binding domain-containing protein 3 (Efcab3) from Rattus norvegicus (Rat).